The chain runs to 396 residues: Protein PIN-LIKES 5 (396 aa).

Residues 1-5 (MGFWS) lie on the Lumenal side of the membrane. Residues 6–26 (LLEVASMPVIQVLFMSLVGAF) form a helical membrane-spanning segment. Topologically, residues 27-45 (MASDRCKLFPVEARNSMNK) are cytoplasmic. Residues 46 to 66 (VVFVLFAPALMFANLAQTVTL) form a helical membrane-spanning segment. At 67-73 (EDIISWW) the chain is on the lumenal side. Residues 74 to 94 (FMPVNMGLTFLIGGLLGWLVV) form a helical membrane-spanning segment. At 95 to 106 (KILKPPPYLEGL) the chain is on the cytoplasmic side. The helical transmembrane segment at 107-127 (IVATCSAGNMGNLPIILVPAI) threads the bilayer. Residues 128–144 (CDEDKSPFGNRSVCRTV) are Lumenal-facing. The helical transmembrane segment at 145-165 (GLSYASFSMALGGFYIWTYTF) threads the bilayer. Residues 166–229 (RLIKGSAMKV…WRKGVDFLHE (64 aa)) lie on the Cytoplasmic side of the membrane. A helical membrane pass occupies residues 230–250 (ILEELLAPPTLGAIIGFIFGA). The Lumenal segment spans residues 251 to 273 (VRWLRNLIIGDDAPLRIVQSTAK). Residues 274-294 (LLGDGTIPCMTIILGGNLIQG) form a helical membrane-spanning segment. The Cytoplasmic portion of the chain corresponds to 295–312 (LRSSAVKPMVVLGIVCVR). Residues 313 to 333 (YIAMPIIGIGIVLTAANLGFL) traverse the membrane as a helical segment. The Lumenal portion of the chain corresponds to 334 to 337 (PADP). Residues 338 to 358 (LFQYVLMLQFTLPPAMNIGTM) form a helical membrane-spanning segment. Over 359–370 (TQLYNVAQDECS) the chain is Cytoplasmic. Residues 371-391 (VLMLWTYLVAILALTVWSTIF) form a helical membrane-spanning segment. The Lumenal segment spans residues 392–396 (LHLLV).

The protein belongs to the auxin efflux carrier (TC 2.A.69.2) family. As to expression, expressed in seedlings, cauline leaves and flowers.

It is found in the endoplasmic reticulum membrane. Functionally, involved in cellular auxin homeostasis by regulating auxin metabolism. Regulates intracellular auxin accumulation at the endoplasmic reticulum and thus auxin availability for nuclear auxin signaling. This is Protein PIN-LIKES 5 from Arabidopsis thaliana (Mouse-ear cress).